A 350-amino-acid polypeptide reads, in one-letter code: Heat-inducible transcription repressor HrcA (350 aa).

It belongs to the HrcA family.

Negative regulator of class I heat shock genes (grpE-dnaK-dnaJ and groELS operons). Prevents heat-shock induction of these operons. In Xanthomonas oryzae pv. oryzae (strain KACC10331 / KXO85), this protein is Heat-inducible transcription repressor HrcA.